The sequence spans 280 residues: C-type lectin domain family 1 member A (280 aa).

The interval 1–44 is disordered; sequence MQAKYSSTRDMLDDDGDTTMSLHSQGSATTRHPEPRRTEHRAPS. Residues 1–52 are Cytoplasmic-facing; that stretch reads MQAKYSSTRDMLDDDGDTTMSLHSQGSATTRHPEPRRTEHRAPSSTWRPVAL. The segment covering 18–30 has biased composition (polar residues); it reads TTMSLHSQGSATT. The segment covering 31-42 has biased composition (basic and acidic residues); the sequence is RHPEPRRTEHRA. Residues 53 to 73 traverse the membrane as a helical; Signal-anchor for type II membrane protein segment; that stretch reads TLLTLCLVLLIGLAALGLLFF. The Extracellular segment spans residues 74 to 280; sequence QYYQLSNTGQ…VPPETLGEGD (207 aa). Residues N95 and N169 are each glycosylated (N-linked (GlcNAc...) asparagine). Positions 144–258 constitute a C-type lectin domain; that stretch reads HGDNCYQFYK…CKELKRCVCE (115 aa). Disulfide bonds link C165-C257 and C236-C249.

In terms of tissue distribution, expressed preferentially in dendritic cells.

The protein localises to the membrane. The sequence is that of C-type lectin domain family 1 member A (CLEC1A) from Homo sapiens (Human).